A 271-amino-acid polypeptide reads, in one-letter code: Troponin T, fast skeletal muscle (271 aa).

Residues 1–21 (MSDEEVEHVEEEYEEEEEAQE) show a composition bias toward acidic residues. Residues 1–74 (MSDEEVEHVE…EKVDFDDIQK (74 aa)) form a disordered region. The residue at position 2 (Ser2) is an N-acetylserine. Ser2 is modified (phosphoserine). Basic and acidic residues-rich tracts occupy residues 29–53 (EVHE…EKPR) and 62–74 (PEGE…DIQK). A Phosphoserine modification is found at Ser90. Over residues 113 to 155 (RAERAEQQRIRAEKERERQNRLAEEKARREEEEAKRRAEDDLK) the composition is skewed to basic and acidic residues. Residues 113 to 192 (RAERAEQQRI…TAREMKKKVL (80 aa)) are disordered. Phosphoserine is present on residues Ser161, Ser168, and Ser169. The span at 183 to 192 (TAREMKKKVL) shows a compositional bias: basic and acidic residues. Residue Ser205 is modified to Phosphoserine. Tyr221 is subject to Phosphotyrosine. The tract at residues 249–271 (DQAQKHSKKAGTTPKGKVGGRWK) is disordered.

It belongs to the troponin T family.

In terms of biological role, troponin T is the tropomyosin-binding subunit of troponin, the thin filament regulatory complex which confers calcium-sensitivity to striated muscle actomyosin ATPase activity. This chain is Troponin T, fast skeletal muscle (TNNT3), found in Sus scrofa (Pig).